Reading from the N-terminus, the 440-residue chain is tRNA(Ile)-lysidine synthase (440 aa).

Residue 19-24 (SGGLDS) coordinates ATP.

Belongs to the tRNA(Ile)-lysidine synthase family.

The protein localises to the cytoplasm. The catalysed reaction is cytidine(34) in tRNA(Ile2) + L-lysine + ATP = lysidine(34) in tRNA(Ile2) + AMP + diphosphate + H(+). Functionally, ligates lysine onto the cytidine present at position 34 of the AUA codon-specific tRNA(Ile) that contains the anticodon CAU, in an ATP-dependent manner. Cytidine is converted to lysidine, thus changing the amino acid specificity of the tRNA from methionine to isoleucine. The chain is tRNA(Ile)-lysidine synthase from Buchnera aphidicola subsp. Acyrthosiphon pisum (strain APS) (Acyrthosiphon pisum symbiotic bacterium).